The chain runs to 638 residues: Chaperone protein DnaK (638 aa).

Phosphothreonine; by autocatalysis is present on Thr200. The tract at residues 598–621 (SLHMAATAEQQSGSTGAGAGASAK) is disordered.

It belongs to the heat shock protein 70 family.

Acts as a chaperone. In Xylella fastidiosa (strain M23), this protein is Chaperone protein DnaK.